Here is a 212-residue protein sequence, read N- to C-terminus: Large ribosomal subunit protein uL4 (212 aa).

The segment covering 43 to 52 (NNRQGTASTK) has biased composition (polar residues). The interval 43 to 77 (NNRQGTASTKTRSEVRGGGRKPWRQKGTGRARAGS) is disordered. A compositionally biased stretch (basic residues) spans 60-71 (GGRKPWRQKGTG).

The protein belongs to the universal ribosomal protein uL4 family. Part of the 50S ribosomal subunit.

One of the primary rRNA binding proteins, this protein initially binds near the 5'-end of the 23S rRNA. It is important during the early stages of 50S assembly. It makes multiple contacts with different domains of the 23S rRNA in the assembled 50S subunit and ribosome. Functionally, forms part of the polypeptide exit tunnel. The polypeptide is Large ribosomal subunit protein uL4 (Trichodesmium erythraeum (strain IMS101)).